A 194-amino-acid polypeptide reads, in one-letter code: Probable nicotinate-nucleotide adenylyltransferase (194 aa).

The protein belongs to the NadD family.

It catalyses the reaction nicotinate beta-D-ribonucleotide + ATP + H(+) = deamido-NAD(+) + diphosphate. The protein operates within cofactor biosynthesis; NAD(+) biosynthesis; deamido-NAD(+) from nicotinate D-ribonucleotide: step 1/1. Its function is as follows. Catalyzes the reversible adenylation of nicotinate mononucleotide (NaMN) to nicotinic acid adenine dinucleotide (NaAD). The protein is Probable nicotinate-nucleotide adenylyltransferase of Brucella suis biovar 1 (strain 1330).